A 288-amino-acid polypeptide reads, in one-letter code: Signal recognition particle receptor FtsY (288 aa).

GTP is bound by residues G93–T100, D175–R179, and T233–D236.

It belongs to the GTP-binding SRP family. FtsY subfamily. As to quaternary structure, part of the signal recognition particle protein translocation system, which is composed of SRP and FtsY.

The protein resides in the cell membrane. It is found in the cytoplasm. It catalyses the reaction GTP + H2O = GDP + phosphate + H(+). Involved in targeting and insertion of nascent membrane proteins into the cytoplasmic membrane. Acts as a receptor for the complex formed by the signal recognition particle (SRP) and the ribosome-nascent chain (RNC). The sequence is that of Signal recognition particle receptor FtsY from Thermoplasma acidophilum (strain ATCC 25905 / DSM 1728 / JCM 9062 / NBRC 15155 / AMRC-C165).